A 62-amino-acid chain; its full sequence is Large ribosomal subunit protein bL28 (62 aa).

The disordered stretch occupies residues 1–24; sequence MARKCVITGRKTKAGNNRSHAMNS. Residues 14-24 show a composition bias toward polar residues; that stretch reads AGNNRSHAMNS.

This sequence belongs to the bacterial ribosomal protein bL28 family.

This chain is Large ribosomal subunit protein bL28, found in Bacillus pumilus (strain SAFR-032).